The primary structure comprises 109 residues: Enhancer of rudimentary homolog (109 aa).

This sequence belongs to the E(R) family. As to quaternary structure, homodimer.

Its function is as follows. May have a role in the cell cycle. The sequence is that of Enhancer of rudimentary homolog from Arabidopsis thaliana (Mouse-ear cress).